Reading from the N-terminus, the 172-residue chain is Small ribosomal subunit protein uS5 (172 aa).

The S5 DRBM domain maps to 17–80; the sequence is LKEKMIAINR…EEARRNMTKV (64 aa).

Belongs to the universal ribosomal protein uS5 family. In terms of assembly, part of the 30S ribosomal subunit. Contacts proteins S4 and S8.

In terms of biological role, with S4 and S12 plays an important role in translational accuracy. Functionally, located at the back of the 30S subunit body where it stabilizes the conformation of the head with respect to the body. This Polaromonas naphthalenivorans (strain CJ2) protein is Small ribosomal subunit protein uS5.